Consider the following 34-residue polypeptide: Phalloidin proprotein (34 aa).

Residues 1–10 (MSDINASRLP) constitute a propeptide that is removed on maturation. The segment at residues 11 to 17 (AWLATCP) is a cross-link (cyclopeptide (Ala-Pro)). The 2'-cysteinyl-6'-hydroxytryptophan sulfoxide (Trp-Cys) cross-link spans 12 to 16 (WLATC). Positions 18 to 34 (CVGDDVNPTLSRGESLC) are excised as a propeptide.

It belongs to the MSDIN fungal toxin family. In terms of processing, processed by the macrocyclase-peptidase enzyme POPB to yield a toxic cyclic heptapeptide. POPB first removes 10 residues from the N-terminus. Conformational trapping of the remaining peptide forces the enzyme to release this intermediate rather than proceed to macrocyclization. The enzyme rebinds the remaining peptide in a different conformation and catalyzes macrocyclization of the N-terminal 7 residues.

In terms of biological role, toxin that belongs to the bicyclic heptapeptides called phallotoxins. Although structurally related to amatoxins, phallotoxins have a different mode of action, which is the stabilization of F-actin. Phallotoxins are poisonous when administered parenterally, but not orally because of poor absorption. The protein is Phalloidin proprotein of Amanita phalloides (Death cap).